A 214-amino-acid polypeptide reads, in one-letter code: MSKPPPKPVKPGQVKVFRALYTFEPRTPDELYFEEGDIIYITDMSDTNWWKGTSKGRTGLIPSNYVAEQAESIDNPLHEAAKRGNLSWLRECLDNRVGVNGLDKAGSTALYWACHGGHKDIVDMLFTQPNIELNQQNKLGDTALHAAAWKGYADIVQLLLAKGARTDLRNNEKKLALDMATNAACASLLKKKQGTDAVRTLSNAEDYLDDEDSD.

Ser2 is modified (N-acetylserine). Positions 12 to 71 constitute an SH3 domain; the sequence is GQVKVFRALYTFEPRTPDELYFEEGDIIYITDMSDTNWWKGTSKGRTGLIPSNYVAEQAE. ANK repeat units lie at residues 72-101, 105-135, and 139-168; these read SIDNPLHEAAKRGNLSWLRECLDNRVGVNG, AGSTALYWACHGGHKDIVDMLFTQPNIELNQ, and LGDTALHAAAWKGYADIVQLLLAKGARTDL. A Phosphothreonine modification is found at Thr200. Phosphoserine is present on residues Ser202 and Ser213.

In terms of assembly, interacts with SRC and SMN1. Interacts with FASLG.

It localises to the cytoplasm. In terms of biological role, induces bone resorption, acting probably through a signaling cascade which results in the secretion of factor(s) enhancing osteoclast formation and activity. In Sus scrofa (Pig), this protein is Osteoclast-stimulating factor 1 (OSTF1).